Consider the following 514-residue polypeptide: Exoglucanase 1 (514 aa).

Residues 1-17 (MYRKLAVISAFLATARA) form the signal peptide. A Pyrrolidone carboxylic acid modification is found at glutamine 18. The tract at residues 18–453 (QSACTLQSET…GSTGNPSGGN (436 aa)) is catalytic. 10 cysteine pairs are disulfide-bonded: cysteine 21–cysteine 89, cysteine 36–cysteine 42, cysteine 67–cysteine 88, cysteine 78–cysteine 84, cysteine 155–cysteine 414, cysteine 189–cysteine 227, cysteine 193–cysteine 226, cysteine 247–cysteine 273, cysteine 255–cysteine 260, and cysteine 278–cysteine 348. An N-linked (GlcNAc) asparagine glycan is attached at asparagine 62. Glutamate 229 (nucleophile) is an active-site residue. The active-site Proton donor/acceptor is glutamate 234. N-linked (GlcNAc...) (high mannose) asparagine glycosylation is present at asparagine 287. Residue asparagine 401 is glycosylated (N-linked (GlcNAc) asparagine). The span at 401–437 (NETSSTPGAVRGSCSTSSGVPAQVESQSPNAKVTFSN) shows a compositional bias: polar residues. A disordered region spans residues 401 to 481 (NETSSTPGAV…TGSSPGPTQS (81 aa)). Residues 454 to 478 (PPGGNPPGTTTTRRPATTTGSSPGP) are linker. The segment covering 460-479 (PGTTTTRRPATTTGSSPGPT) has biased composition (low complexity). O-linked (Man) threonine glycosylation occurs at threonine 462. Threonine 463, threonine 464, and threonine 465 each carry an O-linked (Man...) threonine glycan. Threonine 470 is a glycosylation site (O-linked (Man) threonine). O-linked (Man...) threonine glycosylation is found at threonine 471 and threonine 472. O-linked (Man) serine glycosylation is found at serine 474 and serine 475. Residues 478 to 514 (PTQSHYGQCGGIGYSGPTVCASGTTCQVLNPYYSQCL) enclose the CBM1 domain. A glycan (O-linked (Man) threonine) is linked at threonine 479. 2 O-linked (Man) serine glycosylation sites follow: serine 481 and serine 492. Disulfide bonds link cysteine 486-cysteine 503 and cysteine 497-cysteine 513.

This sequence belongs to the glycosyl hydrolase 7 (cellulase C) family. Post-translationally, N-glycosylated. A high mannose glycan is attached to Asn-287 (predominantly Man(8)GlcNAc(2)) and single GlcNAc occupancy is observed at Asn-62 and Asn-401 with some site heterogeneity depending on strains and fermentation conditions. O-glycosylated. Within the linker domain, all 8 threonines are variably glycosylated with between at least one, and up to three, mannose residues per site. All serines in this domain are at least partially glycosylated with a single mannose residue. O-glycosylation of the cellulase linker provides protection from proteolysis. Linker glycans also contribute to binding affinity of cellobiohydrolases to cellulose.

It is found in the secreted. The catalysed reaction is Hydrolysis of (1-&gt;4)-beta-D-glucosidic linkages in cellulose and cellotetraose, releasing cellobiose from the non-reducing ends of the chains.. Exocellobiohydrolases (CBH) that catalyzes the hydrolysis of 1,4-beta-D-glucosidic bonds in cellulose to release the disaccharide cellobiose. The degradation of cellulose involves an interplay between different cellulolytic enzymes. Hydrolysis starts with endoglucanases (EGs), which cut internal beta-1,4-glucosidic bonds in cellulose to reduce the polymerization degree of the substrate and create new chain ends for exocellobiohydrolases (CBHs). The CBHs release the disaccharide cellobiose from the non-reducing end of the cellulose polymer chain. Finally, beta-1,4-glucosidases hydrolyze the cellobiose and other short cello-oligosaccharides into glucose units. In Hypocrea jecorina (strain ATCC 56765 / BCRC 32924 / NRRL 11460 / Rut C-30) (Trichoderma reesei), this protein is Exoglucanase 1 (cbh1).